Reading from the N-terminus, the 494-residue chain is Ketol-acid reductoisomerase (NADP(+)) (494 aa).

In terms of domain architecture, KARI N-terminal Rossmann spans 14–208; it reads LDQLGRCRFM…GGHRAGCLAS (195 aa). NADP(+)-binding positions include 45–48, Arg68, Arg76, Ser78, and 108–110; these read CGAQ and DKQ. His132 is an active-site residue. Gly158 is a binding site for NADP(+). 2 consecutive KARI C-terminal knotted domains span residues 209-344 and 345-487; these read SFVA…NYPT and TDVK…MKDM. Residues Asp217, Glu221, Glu389, and Glu393 each contribute to the Mg(2+) site. Ser414 contacts substrate.

It belongs to the ketol-acid reductoisomerase family. Mg(2+) is required as a cofactor.

The catalysed reaction is (2R)-2,3-dihydroxy-3-methylbutanoate + NADP(+) = (2S)-2-acetolactate + NADPH + H(+). It carries out the reaction (2R,3R)-2,3-dihydroxy-3-methylpentanoate + NADP(+) = (S)-2-ethyl-2-hydroxy-3-oxobutanoate + NADPH + H(+). It participates in amino-acid biosynthesis; L-isoleucine biosynthesis; L-isoleucine from 2-oxobutanoate: step 2/4. It functions in the pathway amino-acid biosynthesis; L-valine biosynthesis; L-valine from pyruvate: step 2/4. Functionally, involved in the biosynthesis of branched-chain amino acids (BCAA). Catalyzes an alkyl-migration followed by a ketol-acid reduction of (S)-2-acetolactate (S2AL) to yield (R)-2,3-dihydroxy-isovalerate. In the isomerase reaction, S2AL is rearranged via a Mg-dependent methyl migration to produce 3-hydroxy-3-methyl-2-ketobutyrate (HMKB). In the reductase reaction, this 2-ketoacid undergoes a metal-dependent reduction by NADPH to yield (R)-2,3-dihydroxy-isovalerate. In Vibrio cholerae serotype O1 (strain ATCC 39541 / Classical Ogawa 395 / O395), this protein is Ketol-acid reductoisomerase (NADP(+)).